The primary structure comprises 453 residues: 3-phosphoshikimate 1-carboxyvinyltransferase (453 aa).

The span at 1-12 (MDVNVTSSTVRG) shows a compositional bias: polar residues. The tract at residues 1–21 (MDVNVTSSTVRGTTRAPPSKS) is disordered. 3 residues coordinate 3-phosphoshikimate: Lys-20, Ser-21, and Arg-25. Position 20 (Lys-20) interacts with phosphoenolpyruvate. 2 residues coordinate phosphoenolpyruvate: Gly-97 and Arg-125. 3-phosphoshikimate is bound by residues Ser-170, Ser-171, Gln-172, Ser-198, Asp-330, and Lys-357. Gln-172 lines the phosphoenolpyruvate pocket. Asp-330 serves as the catalytic Proton acceptor. The phosphoenolpyruvate site is built by Arg-361 and Arg-404.

Belongs to the EPSP synthase family. Monomer.

The protein localises to the cytoplasm. It carries out the reaction 3-phosphoshikimate + phosphoenolpyruvate = 5-O-(1-carboxyvinyl)-3-phosphoshikimate + phosphate. It functions in the pathway metabolic intermediate biosynthesis; chorismate biosynthesis. Catalyzes the transfer of the enolpyruvyl moiety of phosphoenolpyruvate (PEP) to the 5-hydroxyl of shikimate-3-phosphate (S3P) to produce enolpyruvyl shikimate-3-phosphate and inorganic phosphate. In Halorubrum lacusprofundi (strain ATCC 49239 / DSM 5036 / JCM 8891 / ACAM 34), this protein is 3-phosphoshikimate 1-carboxyvinyltransferase.